Consider the following 874-residue polypeptide: Alanine--tRNA ligase (874 aa).

Residues histidine 562, histidine 566, cysteine 663, and histidine 667 each coordinate Zn(2+).

Belongs to the class-II aminoacyl-tRNA synthetase family. Zn(2+) is required as a cofactor.

It is found in the cytoplasm. The catalysed reaction is tRNA(Ala) + L-alanine + ATP = L-alanyl-tRNA(Ala) + AMP + diphosphate. Its function is as follows. Catalyzes the attachment of alanine to tRNA(Ala) in a two-step reaction: alanine is first activated by ATP to form Ala-AMP and then transferred to the acceptor end of tRNA(Ala). Also edits incorrectly charged Ser-tRNA(Ala) and Gly-tRNA(Ala) via its editing domain. This chain is Alanine--tRNA ligase, found in Bordetella pertussis (strain Tohama I / ATCC BAA-589 / NCTC 13251).